We begin with the raw amino-acid sequence, 460 residues long: Acetyl-coenzyme A carboxylase carboxyl transferase subunit beta, chloroplastic (460 aa).

One can recognise a CoA carboxyltransferase N-terminal domain in the interval 179-460; sequence LWVQCESCYG…GFFPLTQNGN (282 aa). Residues Cys183, Cys186, Cys202, and Cys205 each coordinate Zn(2+). Residues 183-205 form a C4-type zinc finger; that stretch reads CESCYGLNYKKFFKSKMNICEHC.

Belongs to the AccD/PCCB family. Acetyl-CoA carboxylase is a heterohexamer composed of biotin carboxyl carrier protein, biotin carboxylase and 2 subunits each of ACCase subunit alpha and ACCase plastid-coded subunit beta (accD). Zn(2+) serves as cofactor.

The protein localises to the plastid. It is found in the chloroplast stroma. The catalysed reaction is N(6)-carboxybiotinyl-L-lysyl-[protein] + acetyl-CoA = N(6)-biotinyl-L-lysyl-[protein] + malonyl-CoA. It functions in the pathway lipid metabolism; malonyl-CoA biosynthesis; malonyl-CoA from acetyl-CoA: step 1/1. Component of the acetyl coenzyme A carboxylase (ACC) complex. Biotin carboxylase (BC) catalyzes the carboxylation of biotin on its carrier protein (BCCP) and then the CO(2) group is transferred by the transcarboxylase to acetyl-CoA to form malonyl-CoA. This Cicer arietinum (Chickpea) protein is Acetyl-coenzyme A carboxylase carboxyl transferase subunit beta, chloroplastic.